The primary structure comprises 580 residues: FAD-dependent monooxygenase yanF (580 aa).

The interval 1 to 21 is disordered; the sequence is MSSSAECRPIGWGGWGPDPNT. One can recognise an FAD-binding PCMH-type domain in the interval 150 to 322; the sequence is CRLNASCIVT…VEYDLTTNTG (173 aa). H187 carries the pros-8alpha-FAD histidine modification.

Belongs to the oxygen-dependent FAD-linked oxidoreductase family.

The protein operates within secondary metabolite biosynthesis; terpenoid biosynthesis. In terms of biological role, FAD-dependent monooxygenase; part of the gene cluster that mediates the biosynthesis of yanuthone D, a fungal isoprenoid epoxycyclohexenone that acts as an antibiotic against fungi and bacteria. The first step of the pathway is the synthesis of 6-methylsalicylic acid (6-MSA) by the polyketide synthase yanA. 6-MSA is then converted to m-cresol by the decarboxylase yanB. The cytochrome P450 monooxygenase yanC then catalyzes the oxidation of m-cresol to toluquinol. Epoxidation of toluquinol is then performed by the short chain dehydrogenase yanD, with the help of yanE, and a further prenylated by yanG leads to 7-deacetoxyyanuthone A. The next step is the hydroxylation of C-22 of 7-deacetoxyyanuthone A by the cytochrome P450 monooxygenase yanH to yield 22-deacetylyanuthone A. O-Mevalon transferase yanI then attaches mevalon to the hydroxyl group of 22-deacetylyanuthone A to produce yanuthone E. Finally, the FAD-dependent monooxygenase yanF oxidizes the hydroxyl group at C15 of yanuthone E to form yanuthone D. Furthermore, several branching points in the pathway lead to the production of yanuthones F and G from 7-deacetoxyyanuthone A; yanuthones H and I from 22-deacetylyanuthone A; and yanuthone J from yanuthone E. This is FAD-dependent monooxygenase yanF from Aspergillus niger (strain ATCC 1015 / CBS 113.46 / FGSC A1144 / LSHB Ac4 / NCTC 3858a / NRRL 328 / USDA 3528.7).